We begin with the raw amino-acid sequence, 319 residues long: N-acyl-aromatic-L-amino acid amidohydrolase (carboxylate-forming) (319 aa).

The segment at 1–210 (MCSLPVPREP…TVLDFIELFN (210 aa)) is hydrolytic domain. Residues His21 and Glu24 each contribute to the Zn(2+) site. Substrate contacts are provided by residues Arg63 and 70–71 (NR). His116 is a Zn(2+) binding site. Residues Glu178 and Tyr288 each contribute to the substrate site. The shielding domain stretch occupies residues 211–318 (QGTAFPAFEM…PALTPAPSPA (108 aa)).

This sequence belongs to the AspA/AstE family. Aspartoacylase subfamily. Exists as a mixture of homodimers and homotetramer, both catalytically active. As to quaternary structure, (Microbial infection) Interacts with hepatitis C virus/HCV core protein. The cofactor is Zn(2+).

It is found in the apical cell membrane. The protein resides in the cytoplasm. The catalysed reaction is an N-acyl-aromatic L-alpha-amino acid + H2O = an aromatic L-alpha-amino acid + a carboxylate. It carries out the reaction an N-acetyl-L-cysteine-S-conjugate + H2O = an S-substituted L-cysteine + acetate. Plays an important role in deacetylating mercapturic acids in kidney proximal tubules. Also acts on N-acetyl-aromatic amino acids. The chain is N-acyl-aromatic-L-amino acid amidohydrolase (carboxylate-forming) (ACY3) from Homo sapiens (Human).